A 298-amino-acid chain; its full sequence is Acetylglutamate kinase (298 aa).

Substrate is bound by residues 68–69, Arg90, and Asn195; that span reads GG.

It belongs to the acetylglutamate kinase family. ArgB subfamily.

The protein resides in the cytoplasm. It catalyses the reaction N-acetyl-L-glutamate + ATP = N-acetyl-L-glutamyl 5-phosphate + ADP. The protein operates within amino-acid biosynthesis; L-arginine biosynthesis; N(2)-acetyl-L-ornithine from L-glutamate: step 2/4. In terms of biological role, catalyzes the ATP-dependent phosphorylation of N-acetyl-L-glutamate. This chain is Acetylglutamate kinase, found in Hydrogenovibrio crunogenus (strain DSM 25203 / XCL-2) (Thiomicrospira crunogena).